We begin with the raw amino-acid sequence, 273 residues long: 4-hydroxy-tetrahydrodipicolinate reductase (273 aa).

NAD(+)-binding positions include 12–17 (GAGGRM) and glutamate 38. Arginine 39 contributes to the NADP(+) binding site. Residues 102 to 104 (GTT) and 126 to 129 (AANF) contribute to the NAD(+) site. Histidine 159 functions as the Proton donor/acceptor in the catalytic mechanism. Histidine 160 lines the (S)-2,3,4,5-tetrahydrodipicolinate pocket. Residue lysine 163 is the Proton donor of the active site. 169–170 (GT) lines the (S)-2,3,4,5-tetrahydrodipicolinate pocket.

Belongs to the DapB family. Homotetramer.

The protein localises to the cytoplasm. It catalyses the reaction (S)-2,3,4,5-tetrahydrodipicolinate + NAD(+) + H2O = (2S,4S)-4-hydroxy-2,3,4,5-tetrahydrodipicolinate + NADH + H(+). It carries out the reaction (S)-2,3,4,5-tetrahydrodipicolinate + NADP(+) + H2O = (2S,4S)-4-hydroxy-2,3,4,5-tetrahydrodipicolinate + NADPH + H(+). Its pathway is amino-acid biosynthesis; L-lysine biosynthesis via DAP pathway; (S)-tetrahydrodipicolinate from L-aspartate: step 4/4. Functionally, catalyzes the conversion of 4-hydroxy-tetrahydrodipicolinate (HTPA) to tetrahydrodipicolinate. In Shigella flexneri, this protein is 4-hydroxy-tetrahydrodipicolinate reductase.